The sequence spans 26 residues: M-poneritoxin-Ng1c (26 aa).

In terms of tissue distribution, expressed by the venom gland.

The protein resides in the secreted. The protein localises to the target cell membrane. Its function is as follows. Has a broad spectrum of activity against both Gram-positive and Gram-negative bacteria and S.cerevisiae. Has insecticidal and hemolytic activities. May act by disrupting the integrity of the bacterial cell membrane. The sequence is that of M-poneritoxin-Ng1c from Neoponera goeldii (Ponerine ant).